A 187-amino-acid chain; its full sequence is Ion-translocating oxidoreductase complex subunit B (187 aa).

Residues 1-23 are hydrophobic; sequence MIAAAASMSALGLGLGYLLGAAA. Residues 29–88 enclose the 4Fe-4S domain; sequence ETPPIVEEIAKILPGTNCGACGFPGCNGLAEAMAEGNAPVTACTPGGRDVALALAEIVTV. The [4Fe-4S] cluster site is built by Cys46, Cys49, Cys54, Cys71, Cys112, Cys115, Cys118, Cys122, Cys142, Cys145, Cys148, and Cys152. 4Fe-4S ferredoxin-type domains follow at residues 103 to 132 and 133 to 162; these read MVAFVFEDHCTGCQKCFKRCPTDAIVGGAK and QIHTVVMDACIGCDACIEVCPTEAIVSRVK.

This sequence belongs to the 4Fe4S bacterial-type ferredoxin family. RnfB subfamily. In terms of assembly, the complex is composed of six subunits: RnfA, RnfB, RnfC, RnfD, RnfE and RnfG. It depends on [4Fe-4S] cluster as a cofactor.

It is found in the cellular chromatophore membrane. In terms of biological role, part of a membrane-bound complex that couples electron transfer with translocation of ions across the membrane. Required for nitrogen fixation. Involved in electron transfer to nitrogenase. This is Ion-translocating oxidoreductase complex subunit B from Rhodobacter capsulatus (Rhodopseudomonas capsulata).